The chain runs to 198 residues: Carnitine operon protein CaiE (198 aa).

The interval 174–198 (KPLTQAEENRPRLKGTTDVKPKSAQ) is disordered. Over residues 180-198 (EENRPRLKGTTDVKPKSAQ) the composition is skewed to basic and acidic residues.

Belongs to the transferase hexapeptide repeat family.

It participates in amine and polyamine metabolism; carnitine metabolism. In terms of biological role, overproduction of CaiE stimulates the activity of CaiB and CaiD. This Salmonella dublin (strain CT_02021853) protein is Carnitine operon protein CaiE.